The chain runs to 572 residues: Phosphoenolpyruvate-protein phosphotransferase (572 aa).

Histidine 190 acts as the Tele-phosphohistidine intermediate in catalysis. Phosphoenolpyruvate contacts are provided by arginine 297 and arginine 333. Mg(2+)-binding residues include glutamate 427 and aspartate 451. Residues 450–451 (ND) and arginine 461 each bind phosphoenolpyruvate. The active-site Proton donor is the cysteine 498.

It belongs to the PEP-utilizing enzyme family. Homodimer. Mg(2+) serves as cofactor.

It localises to the cytoplasm. It catalyses the reaction L-histidyl-[protein] + phosphoenolpyruvate = N(pros)-phospho-L-histidyl-[protein] + pyruvate. In terms of biological role, general (non sugar-specific) component of the phosphoenolpyruvate-dependent sugar phosphotransferase system (sugar PTS). This major carbohydrate active-transport system catalyzes the phosphorylation of incoming sugar substrates concomitantly with their translocation across the cell membrane. Enzyme I transfers the phosphoryl group from phosphoenolpyruvate (PEP) to the phosphoryl carrier protein (HPr). The sequence is that of Phosphoenolpyruvate-protein phosphotransferase (ptsI) from Mycoplasma pneumoniae (strain ATCC 29342 / M129 / Subtype 1) (Mycoplasmoides pneumoniae).